Consider the following 494-residue polypeptide: Aspartyl/glutamyl-tRNA(Asn/Gln) amidotransferase subunit B (494 aa).

The tract at residues 475-494 is disordered; the sequence is TSGRADPKATNQMLAKKLKG.

The protein belongs to the GatB/GatE family. GatB subfamily. Heterotrimer of A, B and C subunits.

The enzyme catalyses L-glutamyl-tRNA(Gln) + L-glutamine + ATP + H2O = L-glutaminyl-tRNA(Gln) + L-glutamate + ADP + phosphate + H(+). It catalyses the reaction L-aspartyl-tRNA(Asn) + L-glutamine + ATP + H2O = L-asparaginyl-tRNA(Asn) + L-glutamate + ADP + phosphate + 2 H(+). Functionally, allows the formation of correctly charged Asn-tRNA(Asn) or Gln-tRNA(Gln) through the transamidation of misacylated Asp-tRNA(Asn) or Glu-tRNA(Gln) in organisms which lack either or both of asparaginyl-tRNA or glutaminyl-tRNA synthetases. The reaction takes place in the presence of glutamine and ATP through an activated phospho-Asp-tRNA(Asn) or phospho-Glu-tRNA(Gln). This is Aspartyl/glutamyl-tRNA(Asn/Gln) amidotransferase subunit B from Acaryochloris marina (strain MBIC 11017).